Reading from the N-terminus, the 304-residue chain is Quinolinate synthase 1 (304 aa).

Residues His24 and Ser41 each coordinate iminosuccinate. Cys86 serves as a coordination point for [4Fe-4S] cluster. Iminosuccinate contacts are provided by residues 112-114 (YVN) and Ser129. Cys171 serves as a coordination point for [4Fe-4S] cluster. Iminosuccinate contacts are provided by residues 197–199 (HPE) and Thr214. Position 259 (Cys259) interacts with [4Fe-4S] cluster.

The protein belongs to the quinolinate synthase family. Type 2 subfamily. Requires [4Fe-4S] cluster as cofactor.

The protein localises to the cytoplasm. The catalysed reaction is iminosuccinate + dihydroxyacetone phosphate = quinolinate + phosphate + 2 H2O + H(+). The protein operates within cofactor biosynthesis; NAD(+) biosynthesis; quinolinate from iminoaspartate: step 1/1. Functionally, catalyzes the condensation of iminoaspartate with dihydroxyacetone phosphate to form quinolinate. In Methanosarcina acetivorans (strain ATCC 35395 / DSM 2834 / JCM 12185 / C2A), this protein is Quinolinate synthase 1.